A 577-amino-acid polypeptide reads, in one-letter code: Anthranilate synthase alpha subunit 1, chloroplastic (577 aa).

The transit peptide at 1–34 directs the protein to the chloroplast; that stretch reads MASLVLSLRIAPSTPPLGLGGGRFRGRRGAVACR.

It belongs to the anthranilate synthase component I family. As to quaternary structure, heterotetramer consisting of two non-identical subunits: a beta subunit and a large alpha subunit.

The protein localises to the plastid. Its subcellular location is the chloroplast. The catalysed reaction is chorismate + L-glutamine = anthranilate + pyruvate + L-glutamate + H(+). It functions in the pathway amino-acid biosynthesis; L-tryptophan biosynthesis; L-tryptophan from chorismate: step 1/5. Its activity is regulated as follows. Feedback inhibition by tryptophan. Part of a heterotetrameric complex that catalyzes the two-step biosynthesis of anthranilate, an intermediate in the biosynthesis of L-tryptophan. In the first step, the glutamine-binding beta subunit of anthranilate synthase (AS) provides the glutamine amidotransferase activity which generates ammonia as a substrate that, along with chorismate, is used in the second step, catalyzed by the large alpha subunit of AS to produce anthranilate. This Oryza sativa subsp. indica (Rice) protein is Anthranilate synthase alpha subunit 1, chloroplastic (ASA1).